The primary structure comprises 125 residues: 14 kDa phosphohistidine phosphatase (125 aa).

Ala2 is subject to N-acetylalanine. Residue Lys21 coordinates substrate. His53 (proton acceptor) is an active-site residue. Position 94–96 (94–96 (SMA)) interacts with substrate.

This sequence belongs to the janus family. Monomer. In terms of tissue distribution, expressed abundantly in heart and skeletal muscle.

The protein localises to the cytoplasm. The enzyme catalyses N(pros)-phospho-L-histidyl-[protein] + H2O = L-histidyl-[protein] + phosphate. The catalysed reaction is N(tele)-phospho-L-histidyl-[protein] + H2O = L-histidyl-[protein] + phosphate. In terms of biological role, exhibits phosphohistidine phosphatase activity. The polypeptide is 14 kDa phosphohistidine phosphatase (PHPT1) (Homo sapiens (Human)).